The sequence spans 333 residues: MIDTTLPLTDIHRHLDGNIRPQTILELGRQYNISLPAQSLETLIPHVQVIANEPDLVSFLTKLDWGVKVLASLDACRRVAFENIEDAARNGLHYVELRFSPGYMAMAHKLPVAGVVEAVIDGVREGCRTFGVQAKLIGIMSRTFGEAACQQELEAFLAHRDQITALDLAGDELGFPGSLFLSHFNLARDAGWHITVHAGEAAGPESIWQAIRELGAERIGHGVKAIEDRALMDFLAEQQIGIESCLTSNIQTSTVAELAAHPLKTFLEHGIRAGINTDDPGVQGVDIIHEYTVAAPAAGLSREQIRQAQINGLEMAFLSAEEKRALREKVAAK.

Positions 12 and 14 each coordinate Zn(2+). 3 residues coordinate substrate: histidine 14, aspartate 16, and glycine 170. Histidine 197 serves as a coordination point for Zn(2+). Glutamate 200 acts as the Proton donor in catalysis. Aspartate 278 contributes to the Zn(2+) binding site. Aspartate 279 serves as a coordination point for substrate.

This sequence belongs to the metallo-dependent hydrolases superfamily. Adenosine and AMP deaminases family. Adenosine deaminase subfamily. It depends on Zn(2+) as a cofactor.

The enzyme catalyses adenosine + H2O + H(+) = inosine + NH4(+). It carries out the reaction 2'-deoxyadenosine + H2O + H(+) = 2'-deoxyinosine + NH4(+). Functionally, catalyzes the hydrolytic deamination of adenosine and 2-deoxyadenosine. This Shigella boydii serotype 4 (strain Sb227) protein is Adenosine deaminase.